The sequence spans 108 residues: Ig light chain C region (108 aa).

Residues Pro7 to Gln102 enclose the Ig-like domain. 2 disulfides stabilise this stretch: Cys13–Cys106 and Cys28–Cys86.

The polypeptide is Ig light chain C region (Aquarana catesbeiana (American bullfrog)).